We begin with the raw amino-acid sequence, 305 residues long: MQCEFKGVISALPTPYDQSQQIDMESLRKLIRFNIEQNIKGLYVGGSTGEAFLQNVAEREKILETVADESDGRLTLIAHVGGISTAESEVLAKAAKKYGYHAISAVTPFYYPFSFEEHCIHYRKIIDSADGLPMVVYNIPALSGVRFSLDQINELVTIPRVCALKQTSGDLFQMEQIKRNHPELVLYNGYDEIFASGLIAGADGGIGSTYNIMGWRYLEIFEAVKNNDVIKAKEMQVACNQVIDTLIQSGVLAGIKTLLYYMGIINTPVCRSPFSPVKEKNLDVLSKLAERLFEEHDRNKKMKII.

Aceneuramate contacts are provided by S47 and T48. Y137 functions as the Proton donor in the catalytic mechanism. K165 (schiff-base intermediate with substrate) is an active-site residue. The aceneuramate site is built by T167, G189, D191, E192, and S208.

The protein belongs to the DapA family. NanA subfamily. As to quaternary structure, homotetramer.

It localises to the cytoplasm. The catalysed reaction is aceneuramate = aldehydo-N-acetyl-D-mannosamine + pyruvate. It participates in amino-sugar metabolism; N-acetylneuraminate degradation; D-fructose 6-phosphate from N-acetylneuraminate: step 1/5. Its function is as follows. Catalyzes the reversible aldol cleavage of N-acetylneuraminic acid (sialic acid; Neu5Ac) to form pyruvate and N-acetylmannosamine (ManNAc) via a Schiff base intermediate. This is N-acetylneuraminate lyase 2 from Escherichia coli O6:H1 (strain CFT073 / ATCC 700928 / UPEC).